A 520-amino-acid polypeptide reads, in one-letter code: Pleckstrin homology domain-containing family O member 1-A (520 aa).

Disordered stretches follow at residues 1 to 23 (MKKS…QPDK), 208 to 296 (SLDK…GHLQ), 313 to 439 (IQEQ…KSTD), and 497 to 520 (QARQ…QKSP). Positions 20 to 131 (QPDKVGWIRR…WINVLNTAIT (112 aa)) constitute a PH domain. Residues 227 to 241 (PASNTEAQEKTSSLP) show a composition bias toward polar residues. 2 stretches are compositionally biased toward basic and acidic residues: residues 242 to 255 (RKSE…DHPR) and 333 to 347 (DSPR…DSPH). Positions 348 to 361 (SKGSSSPHSANSPS) are enriched in low complexity. Composition is skewed to basic and acidic residues over residues 363–385 (RAKD…DSPR) and 396–418 (KSID…DLTH). Residues 420–439 (KGSQSPLSTGSNSPHMKSTD) show a composition bias toward polar residues. A compositionally biased stretch (basic and acidic residues) spans 497–506 (QARQRREELS). Polar residues predominate over residues 509–520 (GMASQKLQQKSP).

Post-translationally, C-terminal fragments could be released during apoptosis via caspase-3-dependent cleavage.

The protein resides in the membrane. Its subcellular location is the nucleus. It localises to the cytoplasm. Functionally, plays a role in the regulation of the actin cytoskeleton through its interactions with actin capping protein (CP). The sequence is that of Pleckstrin homology domain-containing family O member 1-A (plekho1a) from Danio rerio (Zebrafish).